Consider the following 358-residue polypeptide: MESADFYEAEPRPPMSSHLQSPPHAPSSAAFGFPRGAGPAQPPAPPAAPEPLGGICEHETSIDISAYIDPAAFNDEFLADLFQHSRQQEKAKAAVGPTGGGGGGDFDYPGAPAGPGGAVMPGGAHGPPPGYGCAAAGYLDGRLEPLYERVGAPALRPLVIKQEPREEDEAKQLALAGLFPYQPPPPPPPSHPHPHPPPAHLAAPHLQFQIAHCGQTTMHLQPGHPTPPPTPVPSPHPAPALGAAGLPGPGSALKGLGAAHPDLRASGGSGAGKAKKSVDKNSNEYRVRRERNNIAVRKSRDKAKQRNVETQQKVLELTSDNDRLRKRVEQLSRELDTLRGIFRQLPESSLVKAMGNCA.

Residues 1 to 55 (MESADFYEAEPRPPMSSHLQSPPHAPSSAAFGFPRGAGPAQPPAPPAAPEPLGGI) form a disordered region. The required to repress E2F1:TFDP1-mediated transcription, to inhibit cell cycle and to induce adipocyte differentiation stretch occupies residues 1-70 (MESADFYEAE…SIDISAYIDP (70 aa)). Residues 29-39 (AAFGFPRGAGP) are compositionally biased toward low complexity. The span at 40-49 (AQPPAPPAAP) shows a compositional bias: pro residues. Positions 54–72 (GICEHETSIDISAYIDPAA) are required for interaction with TRIB1. The tract at residues 128-204 (PPGYGCAAAG…HPPPAHLAAP (77 aa)) is required to induce adipocyte differentiation. Lys161 is modified (N6-acetyllysine; alternate). Lys161 participates in a covalent cross-link: Glycyl lysine isopeptide (Lys-Gly) (interchain with G-Cter in SUMO2); alternate. Disordered stretches follow at residues 178–201 (LFPY…PAHL) and 217–291 (TMHL…RRER). Composition is skewed to pro residues over residues 181 to 199 (YQPP…PPPA) and 224 to 238 (HPTP…PHPA). A required to functionally cooperate with SREBF1 in promoter activation region spans residues 182–198 (QPPPPPPPSHPHPHPPP). Residue Ser190 is modified to Phosphoserine. Phosphothreonine; by GSK3 is present on residues Thr226 and Thr230. Phosphoserine; by GSK3 is present on Ser234. Residues 239-259 (PALGAAGLPGPGSALKGLGAA) show a composition bias toward low complexity. The segment at 244 to 358 (AGLPGPGSAL…SLVKAMGNCA (115 aa)) is interaction with FOXO1. Residues 276 to 291 (KSVDKNSNEYRVRRER) are compositionally biased toward basic and acidic residues. In terms of domain architecture, bZIP spans 282–345 (SNEYRVRRER…DTLRGIFRQL (64 aa)). A DNA-binding region spans residues 285 to 300 (YRVRRERNNIAVRKSR). Residues 286 to 313 (RVRRERNNIAVRKSRDKAKQRNVETQQK) form a basic motif region. The tract at residues 317–345 (LTSDNDRLRKRVEQLSRELDTLRGIFRQL) is leucine-zipper.

Belongs to the bZIP family. C/EBP subfamily. Binds DNA as a homodimer and as a heterodimer. Can form stable heterodimers with CEBPB, CEBPD, CEBPE and CEBPG. Interacts with PRDM16. Interacts with UBN1. Interacts with ZNF638; this interaction increases transcriptional activation. Interacts with the complex TFDP2:E2F1; the interaction prevents CEBPA binding to target gene promoters and represses its transcriptional activity. Interacts with RB1. Interacts (when phosphorylated at Ser-190) with CDK2, CDK4, E2F4 and SMARCA2. Interacts with SREBPF1. Interacts with FOXO1 (via the Fork-head domain); the interaction increases when FOXO1 is deacetylated. Interacts with SIX1. Interacts (via recognition sequence) with TRIB1. Interacts (via bZIP domain) with OVOL2 (via zinc-finger domains); the interaction inhibits the transcription factor activity of CEBPA and is required to repress adipogenesis. As to quaternary structure, interacts with TAF1A and UBTF. In terms of assembly, interacts with TAF1A and UBTF. Interacts with NPM1. (Microbial infection) Interacts with HBV protein X. As to quaternary structure, (Microbial infection) Interacts with Epstein-Barr virus lytic switch protein BZLF1; this interaction induces G1 cell cycle arrest. Post-translationally, phosphorylation at Ser-190 is required for interaction with CDK2, CDK4 and SWI/SNF complex leading to cell cycle inhibition. Dephosphorylated at Ser-190 by protein phosphatase 2A (PP2A) through PI3K/AKT signaling pathway regulation. Phosphorylation at Thr-226 and Thr-230 by GSK3 is constitutive in adipose tissue and lung. In liver, both Thr-226 and Thr-230 are phosphorylated only during feeding but not during fasting. Phosphorylation of the GSK3 consensus sites selectively decreases transactivation activity on IRE-controlled promoters. Sumoylated, sumoylation blocks the inhibitory effect on cell proliferation by disrupting the interaction with SMARCA2. In terms of processing, ubiquitinated by COP1 upon interaction with TRIB1.

Its subcellular location is the nucleus. The protein localises to the nucleolus. In terms of biological role, transcription factor that coordinates proliferation arrest and the differentiation of myeloid progenitors, adipocytes, hepatocytes, and cells of the lung and the placenta. Binds directly to the consensus DNA sequence 5'-T[TG]NNGNAA[TG]-3' acting as an activator on distinct target genes. During early embryogenesis, plays essential and redundant functions with CEBPB. Essential for the transition from common myeloid progenitors (CMP) to granulocyte/monocyte progenitors (GMP). Critical for the proper development of the liver and the lung. Necessary for terminal adipocyte differentiation, is required for postnatal maintenance of systemic energy homeostasis and lipid storage. To regulate these different processes at the proper moment and tissue, interplays with other transcription factors and modulators. Down-regulates the expression of genes that maintain cells in an undifferentiated and proliferative state through E2F1 repression, which is critical for its ability to induce adipocyte and granulocyte terminal differentiation. Reciprocally E2F1 blocks adipocyte differentiation by binding to specific promoters and repressing CEBPA binding to its target gene promoters. Proliferation arrest also depends on a functional binding to SWI/SNF complex. In liver, regulates gluconeogenesis and lipogenesis through different mechanisms. To regulate gluconeogenesis, functionally cooperates with FOXO1 binding to IRE-controlled promoters and regulating the expression of target genes such as PCK1 or G6PC1. To modulate lipogenesis, interacts and transcriptionally synergizes with SREBF1 in promoter activation of specific lipogenic target genes such as ACAS2. In adipose tissue, seems to act as FOXO1 coactivator accessing to ADIPOQ promoter through FOXO1 binding sites. Its function is as follows. Can act as dominant-negative. Binds DNA and have transctivation activity, even if much less efficiently than isoform 2. Does not inhibit cell proliferation. Directly and specifically enhances ribosomal DNA transcription interacting with RNA polymerase I-specific cofactors and inducing histone acetylation. The sequence is that of CCAAT/enhancer-binding protein alpha from Homo sapiens (Human).